Reading from the N-terminus, the 398-residue chain is Succinate--CoA ligase [ADP-forming] subunit beta (398 aa).

Residues 9–253 (KEILNSFGVR…VREENATEVE (245 aa)) enclose the ATP-grasp domain. ATP-binding positions include K50, 57–59 (GRG), V106, and E116. Mg(2+) contacts are provided by N208 and D222. Substrate is bound by residues N273 and 330 to 332 (GIV).

Belongs to the succinate/malate CoA ligase beta subunit family. As to quaternary structure, heterotetramer of two alpha and two beta subunits. Requires Mg(2+) as cofactor.

It catalyses the reaction succinate + ATP + CoA = succinyl-CoA + ADP + phosphate. The catalysed reaction is GTP + succinate + CoA = succinyl-CoA + GDP + phosphate. Its pathway is carbohydrate metabolism; tricarboxylic acid cycle; succinate from succinyl-CoA (ligase route): step 1/1. Succinyl-CoA synthetase functions in the citric acid cycle (TCA), coupling the hydrolysis of succinyl-CoA to the synthesis of either ATP or GTP and thus represents the only step of substrate-level phosphorylation in the TCA. The beta subunit provides nucleotide specificity of the enzyme and binds the substrate succinate, while the binding sites for coenzyme A and phosphate are found in the alpha subunit. This chain is Succinate--CoA ligase [ADP-forming] subunit beta, found in Christiangramia forsetii (strain DSM 17595 / CGMCC 1.15422 / KT0803) (Gramella forsetii).